The primary structure comprises 192 residues: Urease accessory protein UreE (192 aa).

The tract at residues 170-192 (EHHGHSHSHSHDHVHDEKCGHKH) is disordered. The segment covering 178–192 (HSHDHVHDEKCGHKH) has biased composition (basic and acidic residues).

The protein belongs to the UreE family.

The protein localises to the cytoplasm. Involved in urease metallocenter assembly. Binds nickel. Probably functions as a nickel donor during metallocenter assembly. The protein is Urease accessory protein UreE of Cupriavidus necator (strain ATCC 17699 / DSM 428 / KCTC 22496 / NCIMB 10442 / H16 / Stanier 337) (Ralstonia eutropha).